A 79-amino-acid chain; its full sequence is Short neurotoxin 3 (79 aa).

An N-terminal signal peptide occupies residues M1–T21. 4 disulfide bridges follow: C24–C41, C34–C59, C63–C71, and C72–C77.

Belongs to the three-finger toxin family. Short-chain subfamily. Type III alpha-neurotoxin sub-subfamily. As to expression, expressed by the venom gland.

It localises to the secreted. In terms of biological role, binds with high affinity to muscle nicotinic acetylcholine receptor (nAChR) and hinders acetylcholine binding to the receptor, thereby impairing neuromuscular transmission. Competes with the binding of alpha-bungarotoxin on muscle AChR (from Torpedo) with an IC(50) of 0.30 uM. Causes muscle paralysis, spasms and increased respiration. This Pseudonaja textilis (Eastern brown snake) protein is Short neurotoxin 3.